A 262-amino-acid polypeptide reads, in one-letter code: Probable carboxylesterase Culp3 (262 aa).

Residues 1-41 (MNNRPIRLLTSGRAGLGAGALITAVVLLIALGAVWTLVAFA) form the signal peptide. An intrachain disulfide couples C44 to C114. The active-site Nucleophile is the S125. A disulfide bond links C188 and C195. D192 is an active-site residue. H206 (proton donor/acceptor) is an active-site residue. A disordered region spans residues 241 to 262 (LPGSVLQMPGTAAPAPESLHGR).

The protein belongs to the cutinase family.

It localises to the secreted. The sequence is that of Probable carboxylesterase Culp3 (cut3) from Mycobacterium tuberculosis (strain CDC 1551 / Oshkosh).